Here is a 984-residue protein sequence, read N- to C-terminus: Hyaluronate lyase (984 aa).

Composition is skewed to polar residues over residues 1-12 (MKQVVDNQTQNK), 19-32 (DFNQ…SWSH), and 54-66 (IQRT…SLSS). Disordered regions lie at residues 1–32 (MKQV…SWSH) and 49–68 (DKSP…SSDK). The signal sequence occupies residues 1 to 40 (MKQVVDNQTQNKELVKNGDFNQTNPVSGSWSHTSAREWSA). Residues asparagine 429, histidine 479, and tyrosine 488 contribute to the active site. Residues 701 to 726 (TEKDAKREDTTKEFMSKHSKDAKEKT) are compositionally biased toward basic and acidic residues. The tract at residues 701-728 (TEKDAKREDTTKEFMSKHSKDAKEKTGQ) is disordered.

The protein belongs to the polysaccharide lyase 8 family.

The protein resides in the secreted. It carries out the reaction [hyaluronan](n) = n 3-(4-deoxy-beta-D-gluc-4-enuronosyl)-N-acetyl-D-glucosamine + H2O. The sequence is that of Hyaluronate lyase from Streptococcus agalactiae serotype III (strain NEM316).